Reading from the N-terminus, the 76-residue chain is MKALQVAGTLMLLFCLLAAVNATPGQVYINGKCIDCNKPDNDPGIIIPPDHKSAGSMSYTLTSGAIFFGIIYHIFS.

The signal sequence occupies residues 1–22 (MKALQVAGTLMLLFCLLAAVNA). The propeptide at 23 to 24 (TP) is removed by a dipeptidylpeptidase. Cys33 and Cys36 form a disulfide bridge.

It belongs to the bomanin family.

It localises to the secreted. Its function is as follows. Secreted immune-induced peptide induced by Toll signaling. Has a role in resistance to bacterial and fungal infections. The strength of antimicrobial activity appears to correlate with the overall level of expression. The polypeptide is Bomanin Tailed 2 (Drosophila melanogaster (Fruit fly)).